The chain runs to 194 residues: Probable GTP-binding protein EngB (194 aa).

The region spanning K22 to K194 is the EngB-type G domain. GTP contacts are provided by residues G30–S37, G57–G61, D75–G78, T142–D145, and F173–A175. Residues S37 and T59 each coordinate Mg(2+).

The protein belongs to the TRAFAC class TrmE-Era-EngA-EngB-Septin-like GTPase superfamily. EngB GTPase family. The cofactor is Mg(2+).

Necessary for normal cell division and for the maintenance of normal septation. The polypeptide is Probable GTP-binding protein EngB (Caldanaerobacter subterraneus subsp. tengcongensis (strain DSM 15242 / JCM 11007 / NBRC 100824 / MB4) (Thermoanaerobacter tengcongensis)).